A 176-amino-acid polypeptide reads, in one-letter code: MFLIITRDTMFFTAMKNILSKGNVVHIQNEEEIDVMLHQNAFVIIDTLMNNVFHSNFLTQIERLKPVHVIVFSPFNIKRCLGKVPVTFVPRTITIIDFVALINGSYCSVPEANVSLSRKQHQVLSCIANQMTTEDILEKLKISLKTFYCHKHNIMMILNLKRINELVRHQHIDYLV.

Residues valine 109–tyrosine 174 enclose the HTH luxR-type domain. Residues threonine 133–histidine 152 constitute a DNA-binding region (H-T-H motif).

Its function is as follows. May act as a transcriptional regulator of dctA. This is HTH-type transcriptional regulator DctR (dctR) from Shigella flexneri.